A 157-amino-acid polypeptide reads, in one-letter code: Large ribosomal subunit protein uL15 (157 aa).

This sequence belongs to the universal ribosomal protein uL15 family. In terms of assembly, part of the 50S ribosomal subunit.

Its function is as follows. Binds to the 23S rRNA. The protein is Large ribosomal subunit protein uL15 of Ehrlichia ruminantium (strain Gardel).